Reading from the N-terminus, the 162-residue chain is Nitrogen regulatory protein (162 aa).

The 145-residue stretch at 12–156 (NVLNQECTRS…EELYEIITEA (145 aa)) folds into the PTS EIIA type-2 domain. Catalysis depends on histidine 73, which acts as the Tele-phosphohistidine intermediate.

The protein localises to the cytoplasm. Functionally, seems to have a role in regulating nitrogen assimilation. The protein is Nitrogen regulatory protein (ptsN) of Klebsiella oxytoca.